The following is a 397-amino-acid chain: Argininosuccinate synthase (397 aa).

7-15 (LYSGGLDTS) contacts ATP. Tyrosine 83 contributes to the L-citrulline binding site. Glycine 113 contacts ATP. Residues threonine 115, asparagine 119, and aspartate 120 each coordinate L-aspartate. Position 119 (asparagine 119) interacts with L-citrulline. L-citrulline contacts are provided by arginine 123, serine 169, serine 178, glutamate 253, and tyrosine 265.

This sequence belongs to the argininosuccinate synthase family. Type 1 subfamily. In terms of assembly, homotetramer.

The protein localises to the cytoplasm. The catalysed reaction is L-citrulline + L-aspartate + ATP = 2-(N(omega)-L-arginino)succinate + AMP + diphosphate + H(+). The protein operates within amino-acid biosynthesis; L-arginine biosynthesis; L-arginine from L-ornithine and carbamoyl phosphate: step 2/3. In Thermoplasma volcanium (strain ATCC 51530 / DSM 4299 / JCM 9571 / NBRC 15438 / GSS1), this protein is Argininosuccinate synthase.